A 345-amino-acid chain; its full sequence is MTDKTSLSYKDAGVDIDAGNALVDRIKGVVKQTRRPEVMGGLGGFGALCALPQKYREPILVSGTDGVGTKLRLAMDLKRHDTIGIDLVAMCVNDLVVQGAEPLFFLDYYATGKLDVDTAASVITGIAEGCKQSGCALVGGETAEMPGMYHGEDYDVAGFCVGVVEKSEIIDGSKVQHGDVLVALAASGPHSNGYSLVRKVLEVSKTDPEQFELEGKSLADHLLAPTKIYVKSVLSLIEKVDVHAISHLTGGGFWENIPRVLPEGMQATIDESSWQWPAVFNWLQQAGNVSRYEMYRTFNCGVGMIIVLPAEQADEAVALLNSSGENAWKIGVITQTDAGDAVVIN.

It belongs to the AIR synthase family.

The protein localises to the cytoplasm. It carries out the reaction 2-formamido-N(1)-(5-O-phospho-beta-D-ribosyl)acetamidine + ATP = 5-amino-1-(5-phospho-beta-D-ribosyl)imidazole + ADP + phosphate + H(+). It participates in purine metabolism; IMP biosynthesis via de novo pathway; 5-amino-1-(5-phospho-D-ribosyl)imidazole from N(2)-formyl-N(1)-(5-phospho-D-ribosyl)glycinamide: step 2/2. The chain is Phosphoribosylformylglycinamidine cyclo-ligase from Pectobacterium atrosepticum (strain SCRI 1043 / ATCC BAA-672) (Erwinia carotovora subsp. atroseptica).